A 249-amino-acid polypeptide reads, in one-letter code: MIKLVLLRHGESQWNRENRFTGWYDIDLTDQGREEAANAGKLLREGGFVFDVAYTSVLKRAIRTLWSVLDAMDLMWIPVFKSWRLNERHYGALQGLNKSETSQKYGEEQVLVWRRSYDTPPPALEKSDERYPGSEPRYADLAEEEIPLSECLKDTVDRFLPIWHETIAPEIRKGRKVIIAAHGNSLRALVKYLDNISEEDIVGVNIPTGIPLVYELDDDLNALRSYYLGDQEALKKAVDAVASQGKASQ.

Residues 8 to 15, 21 to 22, arginine 60, 87 to 90, lysine 98, 114 to 115, and 183 to 184 contribute to the substrate site; these read RHGESQWN, TG, ERHY, RR, and GN. Histidine 9 (tele-phosphohistidine intermediate) is an active-site residue. Glutamate 87 (proton donor/acceptor) is an active-site residue.

It belongs to the phosphoglycerate mutase family. BPG-dependent PGAM subfamily.

It catalyses the reaction (2R)-2-phosphoglycerate = (2R)-3-phosphoglycerate. It participates in carbohydrate degradation; glycolysis; pyruvate from D-glyceraldehyde 3-phosphate: step 3/5. Functionally, catalyzes the interconversion of 2-phosphoglycerate and 3-phosphoglycerate. The polypeptide is 2,3-bisphosphoglycerate-dependent phosphoglycerate mutase (Pelodictyon phaeoclathratiforme (strain DSM 5477 / BU-1)).